The following is a 284-amino-acid chain: Nodulation protein O (284 aa).

Residues 1 to 27 are disordered; sequence MNIKGSDNGSFIKGSPENDIIDGGKKN. 5 Hemolysin-type calcium-binding repeats span residues 13–30, 31–48, 58–75, 94–111, and 112–129; these read KGSP…NDWI, DAGN…QDSI, WAGK…DDLL, HSGE…SDIL, and VAGD…GDAF. Ca(2+) contacts are provided by D100, D109, D118, and D127. An export signal (aspartic acid box) region spans residues 208 to 222; sequence DRGFASAAAAATAID.

Its subcellular location is the secreted. Functionally, the NodO protein may play a role in nodule development by direct interaction with the root hair cells or some other plant surface in a calcium-dependent manner. The polypeptide is Nodulation protein O (nodO) (Rhizobium leguminosarum bv. viciae).